We begin with the raw amino-acid sequence, 468 residues long: Efflux pump azaK (468 aa).

Residues 1-30 (MTVHPPAVADETSPLLPSQDGPGHNGIVPA) form a disordered region. A run of 6 helical transmembrane segments spans residues 43 to 65 (QVAL…FPFV), 80 to 100 (VGFY…MLMI), 112 to 132 (KPVL…FGFS), 135 to 155 (LGQM…VVTV), 174 to 194 (YFSL…GALC), and 207 to 227 (LPTV…LMFV). N228 carries N-linked (GlcNAc...) asparagine glycosylation. 6 consecutive transmembrane segments (helical) span residues 257–277 (VLPV…YTAV), 296–316 (FYIS…LVLV), 329–349 (ILRG…GASV), 357–377 (VAFW…AMQL), 387–407 (VSPS…IISF), and 429–449 (PGFY…AFTL).

This sequence belongs to the major facilitator superfamily.

The protein resides in the cell membrane. Functionally, efflux pump that might be required for efficient secretion of azaphilones. This Aspergillus niger (strain ATCC 1015 / CBS 113.46 / FGSC A1144 / LSHB Ac4 / NCTC 3858a / NRRL 328 / USDA 3528.7) protein is Efflux pump azaK.